The chain runs to 53 residues: Conotoxin Cal9.2f (53 aa).

A propeptide spanning residues 1-6 (KKGVTL) is cleaved from the precursor. 3 disulfide bridges follow: cysteine 15-cysteine 32, cysteine 20-cysteine 42, and cysteine 22-cysteine 47.

In terms of tissue distribution, expressed by the venom duct.

Its subcellular location is the secreted. Functionally, probable neurotoxin with unknown target. Possibly targets ion channels. This chain is Conotoxin Cal9.2f, found in Californiconus californicus (California cone).